The sequence spans 55 residues: Conotoxin Cal14.14 (55 aa).

Residues 1-20 form the signal peptide; that stretch reads MFRLGVFLLTFLLLVSMATS. Cystine bridges form between Cys-34-Cys-48 and Cys-38-Cys-52.

Expressed by the venom duct.

It is found in the secreted. Probable neurotoxin. This chain is Conotoxin Cal14.14, found in Californiconus californicus (California cone).